Reading from the N-terminus, the 466-residue chain is Ribulose bisphosphate carboxylase large chain (466 aa).

K5 carries the N6,N6,N6-trimethyllysine modification. Substrate contacts are provided by N114 and T164. K166 (proton acceptor) is an active-site residue. Residue K168 coordinates substrate. K192, D194, and E195 together coordinate Mg(2+). Position 192 is an N6-carboxylysine (K192). Residue H285 is the Proton acceptor of the active site. Residues R286, H318, and S370 each coordinate substrate.

Belongs to the RuBisCO large chain family. Type I subfamily. As to quaternary structure, heterohexadecamer of 8 large chains and 8 small chains; disulfide-linked. The disulfide link is formed within the large subunit homodimers. Mg(2+) serves as cofactor. The disulfide bond which can form in the large chain dimeric partners within the hexadecamer appears to be associated with oxidative stress and protein turnover.

The protein resides in the plastid. It localises to the chloroplast. The enzyme catalyses 2 (2R)-3-phosphoglycerate + 2 H(+) = D-ribulose 1,5-bisphosphate + CO2 + H2O. It catalyses the reaction D-ribulose 1,5-bisphosphate + O2 = 2-phosphoglycolate + (2R)-3-phosphoglycerate + 2 H(+). Its function is as follows. RuBisCO catalyzes two reactions: the carboxylation of D-ribulose 1,5-bisphosphate, the primary event in carbon dioxide fixation, as well as the oxidative fragmentation of the pentose substrate in the photorespiration process. Both reactions occur simultaneously and in competition at the same active site. This is Ribulose bisphosphate carboxylase large chain from Drosera binata (Fork-leaved sundew).